Reading from the N-terminus, the 414-residue chain is Putative competence-damage inducible protein (414 aa).

It belongs to the CinA family.

The sequence is that of Putative competence-damage inducible protein from Clostridium novyi (strain NT).